The primary structure comprises 526 residues: Amine oxidase [flavin-containing] A (526 aa).

Residue methionine 1 is modified to N-acetylmethionine. Topologically, residues 1–497 (MTDLEKPSIT…HTFLERNLPS (497 aa)) are cytoplasmic. Serine 383 carries the phosphoserine modification. The residue at position 406 (cysteine 406) is an S-8alpha-FAD cysteine. A helical; Anchor for type IV membrane protein transmembrane segment spans residues 498-518 (VPGLLKITGFSTSVALLCFVL). Residues 519–526 (YKFKQPQS) lie on the Mitochondrial intermembrane side of the membrane. An interaction with membrane phospholipid headgroups region spans residues 520-522 (KFK).

The protein belongs to the flavin monoamine oxidase family. Monomer, homo- or heterodimer (containing two subunits of similar size). Each subunit contains a covalently bound flavin. Enzymatically active as monomer. FAD is required as a cofactor.

It is found in the mitochondrion outer membrane. It catalyses the reaction a secondary aliphatic amine + O2 + H2O = a primary amine + an aldehyde + H2O2. It carries out the reaction a primary methyl amine + O2 + H2O = an aldehyde + H2O2 + NH4(+). The catalysed reaction is serotonin + O2 + H2O = (5-hydroxyindol-3-yl)acetaldehyde + H2O2 + NH4(+). The enzyme catalyses (R)-adrenaline + O2 + H2O = (R)-3,4-dihydroxymandelaldehyde + methylamine + H2O2. It catalyses the reaction dopamine + O2 + H2O = 3,4-dihydroxyphenylacetaldehyde + H2O2 + NH4(+). It carries out the reaction tyramine + O2 + H2O = (4-hydroxyphenyl)acetaldehyde + H2O2 + NH4(+). The catalysed reaction is (R)-noradrenaline + O2 + H2O = (R)-3,4-dihydroxymandelaldehyde + H2O2 + NH4(+). The enzyme catalyses kynuramine + O2 + H2O = 3-(2-aminophenyl)-3-oxopropanal + H2O2 + NH4(+). It catalyses the reaction tryptamine + O2 + H2O = indole-3-acetaldehyde + H2O2 + NH4(+). It carries out the reaction 2-phenylethylamine + O2 + H2O = 2-phenylacetaldehyde + H2O2 + NH4(+). Functionally, catalyzes the oxidative deamination of biogenic and xenobiotic amines and has important functions in the metabolism of neuroactive and vasoactive amines in the central nervous system and peripheral tissues. Preferentially oxidizes serotonin. Also catalyzes the oxidative deamination of kynuramine to 3-(2-aminophenyl)-3-oxopropanal that can spontaneously condense to 4-hydroxyquinoline. This is Amine oxidase [flavin-containing] A from Mus musculus (Mouse).